The sequence spans 200 residues: NAD(P)H dehydrogenase (quinone) (200 aa).

Residues 4–190 (VLVLYYSTYG…DGARFQGRLV (187 aa)) form the Flavodoxin-like domain. FMN contacts are provided by residues 10 to 15 (STYGHL) and 78 to 80 (TRF). Tyr-12 provides a ligand contact to NAD(+). A substrate-binding site is contributed by Trp-98. FMN-binding positions include 113–119 (STATQHG) and His-134.

Belongs to the WrbA family. It depends on FMN as a cofactor.

The catalysed reaction is a quinone + NADH + H(+) = a quinol + NAD(+). The enzyme catalyses a quinone + NADPH + H(+) = a quinol + NADP(+). This chain is NAD(P)H dehydrogenase (quinone), found in Acidovorax ebreus (strain TPSY) (Diaphorobacter sp. (strain TPSY)).